Consider the following 466-residue polypeptide: Ribulose bisphosphate carboxylase large chain (466 aa).

K5 bears the N6,N6,N6-trimethyllysine mark. 2 residues coordinate substrate: N114 and T164. K166 functions as the Proton acceptor in the catalytic mechanism. Substrate is bound at residue K168. Residues K192, D194, and E195 each contribute to the Mg(2+) site. The residue at position 192 (K192) is an N6-carboxylysine. H285 acts as the Proton acceptor in catalysis. R286, H318, and S370 together coordinate substrate.

The protein belongs to the RuBisCO large chain family. Type I subfamily. In terms of assembly, heterohexadecamer of 8 large chains and 8 small chains. The cofactor is Mg(2+).

It is found in the plastid. The protein resides in the chloroplast. It catalyses the reaction 2 (2R)-3-phosphoglycerate + 2 H(+) = D-ribulose 1,5-bisphosphate + CO2 + H2O. The enzyme catalyses D-ribulose 1,5-bisphosphate + O2 = 2-phosphoglycolate + (2R)-3-phosphoglycerate + 2 H(+). RuBisCO catalyzes two reactions: the carboxylation of D-ribulose 1,5-bisphosphate, the primary event in carbon dioxide fixation, as well as the oxidative fragmentation of the pentose substrate in the photorespiration process. Both reactions occur simultaneously and in competition at the same active site. This is Ribulose bisphosphate carboxylase large chain from Drosera regia (King sundew).